Consider the following 149-residue polypeptide: Transcriptional repressor NrdR (149 aa).

Residues 3–34 (CPFCSENDTKVIDSRLVADGHQVRRRRQCLAC) fold into a zinc finger. The 91-residue stretch at 49–139 (PKVIKSNGNR…VYRSFEDIRE (91 aa)) folds into the ATP-cone domain.

Belongs to the NrdR family. It depends on Zn(2+) as a cofactor.

Its function is as follows. Negatively regulates transcription of bacterial ribonucleotide reductase nrd genes and operons by binding to NrdR-boxes. The protein is Transcriptional repressor NrdR of Vibrio parahaemolyticus serotype O3:K6 (strain RIMD 2210633).